The sequence spans 288 residues: ATP synthase subunit a (288 aa).

6 consecutive transmembrane segments (helical) span residues 47 to 67 (LDSM…FWLV), 104 to 124 (LIAP…LMDL), 157 to 177 (DPNI…YYSI), 199 to 219 (PIAK…TLIA), 237 to 257 (LIFV…SVPW), and 258 to 278 (AIFH…LTIV).

The protein belongs to the ATPase A chain family. As to quaternary structure, F-type ATPases have 2 components, CF(1) - the catalytic core - and CF(0) - the membrane proton channel. CF(1) has five subunits: alpha(3), beta(3), gamma(1), delta(1), epsilon(1). CF(0) has three main subunits: a(1), b(2) and c(9-12). The alpha and beta chains form an alternating ring which encloses part of the gamma chain. CF(1) is attached to CF(0) by a central stalk formed by the gamma and epsilon chains, while a peripheral stalk is formed by the delta and b chains.

Its subcellular location is the cell inner membrane. Key component of the proton channel; it plays a direct role in the translocation of protons across the membrane. This chain is ATP synthase subunit a, found in Psychrobacter sp. (strain PRwf-1).